Consider the following 835-residue polypeptide: Protein translocase subunit SecA 1 (835 aa).

ATP-binding positions include glutamine 85, 103–107 (GEGKT), and aspartate 492. The interval 788 to 807 (VQGEAVHPSSDGEEAKKKPV) is disordered. 4 residues coordinate Zn(2+): cysteine 819, cysteine 821, cysteine 830, and cysteine 831.

It belongs to the SecA family. In terms of assembly, monomer and homodimer. Part of the essential Sec protein translocation apparatus which comprises SecA, SecYEG and auxiliary proteins SecDF. Other proteins may also be involved. The cofactor is Zn(2+).

It is found in the cell membrane. It localises to the cytoplasm. It catalyses the reaction ATP + H2O + cellular proteinSide 1 = ADP + phosphate + cellular proteinSide 2.. Functionally, part of the Sec protein translocase complex. Interacts with the SecYEG preprotein conducting channel. Has a central role in coupling the hydrolysis of ATP to the transfer of proteins into and across the cell membrane, serving as an ATP-driven molecular motor driving the stepwise translocation of polypeptide chains across the membrane. The chain is Protein translocase subunit SecA 1 from Bacillus thuringiensis subsp. konkukian (strain 97-27).